The sequence spans 313 residues: Aspartate carbamoyltransferase catalytic subunit (313 aa).

Residues Arg-58 and Thr-59 each contribute to the carbamoyl phosphate site. Residue Lys-86 coordinates L-aspartate. Carbamoyl phosphate-binding residues include Arg-108, His-136, and Gln-139. The L-aspartate site is built by Arg-169 and Arg-223. Positions 264 and 265 each coordinate carbamoyl phosphate.

This sequence belongs to the aspartate/ornithine carbamoyltransferase superfamily. ATCase family. In terms of assembly, heterododecamer (2C3:3R2) of six catalytic PyrB chains organized as two trimers (C3), and six regulatory PyrI chains organized as three dimers (R2).

It carries out the reaction carbamoyl phosphate + L-aspartate = N-carbamoyl-L-aspartate + phosphate + H(+). It participates in pyrimidine metabolism; UMP biosynthesis via de novo pathway; (S)-dihydroorotate from bicarbonate: step 2/3. Its function is as follows. Catalyzes the condensation of carbamoyl phosphate and aspartate to form carbamoyl aspartate and inorganic phosphate, the committed step in the de novo pyrimidine nucleotide biosynthesis pathway. The protein is Aspartate carbamoyltransferase catalytic subunit of Ruminiclostridium cellulolyticum (strain ATCC 35319 / DSM 5812 / JCM 6584 / H10) (Clostridium cellulolyticum).